Consider the following 5207-residue polypeptide: NBPF family member NBPF20 (5207 aa).

64 Olduvai domains span residues 5 to 77 (SREL…PSCP), 80 to 135 (SREL…LDVD), 136 to 228 (RTKK…RSKK), 229 to 321 (ERRR…PSCP), 324 to 379 (SREL…LDVD), 380 to 472 (RTKK…RSKK), 473 to 565 (ERRR…PSCP), 568 to 623 (SREL…LDVD), 624 to 716 (RTKK…RSKK), 717 to 809 (ERRR…PSCP), 812 to 867 (SREL…LDVD), 868 to 960 (RTKK…RSKK), 961 to 1053 (ERRR…PSCP), 1056 to 1111 (SREL…LDVD), 1112 to 1204 (RTKK…RSKK), 1205 to 1297 (ERRR…PSCP), 1300 to 1355 (SREL…LDVD), 1356 to 1448 (RTKK…RSKK), 1449 to 1541 (ERRR…PSCP), 1544 to 1599 (SREL…LDVD), 1600 to 1692 (RTKK…RSKK), 1693 to 1785 (ERRR…PSCP), 1788 to 1843 (SREL…LDVD), 1844 to 1936 (RTKK…RSKK), 1937 to 2029 (ERRR…PSCP), 2032 to 2087 (SREL…LDVD), 2088 to 2180 (RTKK…RSKK), 2181 to 2273 (ERRR…PSCP), 2276 to 2331 (SREL…LDVD), 2332 to 2424 (RTKK…RSKK), 2425 to 2517 (ERRR…PSCP), 2520 to 2575 (SREL…LDVD), 2576 to 2668 (RTKK…RSKK), 2669 to 2761 (ERRR…PSCP), 2764 to 2819 (SREL…LDVD), 2820 to 2912 (RTKK…RSKK), 2913 to 3005 (ERRR…PSCP), 3008 to 3063 (SREL…LDVD), 3064 to 3156 (RTKK…RSKK), 3157 to 3249 (ERRR…PSCP), 3252 to 3307 (SREL…LDVD), 3308 to 3400 (RTKK…RSKK), 3401 to 3493 (ERRR…PSCP), 3496 to 3551 (SREL…LDVD), 3552 to 3644 (RTKK…RSKK), 3645 to 3737 (ERRR…PSCP), 3740 to 3795 (SREL…LDVD), 3796 to 3888 (RTKK…RSKK), 3889 to 3981 (ERRR…PSCP), 3984 to 4039 (SREL…LDVD), 4040 to 4132 (RTKK…RSKK), 4133 to 4225 (ERRR…PSCP), 4228 to 4283 (SREL…LDVD), 4284 to 4376 (RTKK…RSKK), 4377 to 4452 (ERRR…LDVD), 4453 to 4545 (RTKK…RSKK), 4546 to 4621 (ERRR…LDVD), 4622 to 4713 (RTKK…PSCP), 4716 to 4771 (SREL…LDVD), 4772 to 4864 (RTKK…RSKK), 4865 to 4957 (ERRR…PSCP), 4960 to 5015 (SREL…LDVD), 5016 to 5108 (RTKK…RSKK), and 5109 to 5207 (KRRR…IFPQ). 2 disordered regions span residues 137-157 (TKKD…LSRE) and 215-256 (KGKG…LDEK). The segment covering 216-234 (GKGKKRRGRRSKKERRRGR) has biased composition (basic residues). Disordered stretches follow at residues 381–403 (TKKD…RELL) and 459–513 (KGKG…DRSY). Residues 460–478 (GKGKKRRGRRSKKERRRGR) show a composition bias toward basic residues. Residues 492-502 (LSRELLDEKGP) are compositionally biased toward basic and acidic residues. Disordered regions lie at residues 625–647 (TKKD…RELL) and 703–744 (KGKG…LDEK). The segment covering 704–722 (GKGKKRRGRRSKKERRRGR) has biased composition (basic residues). Disordered regions lie at residues 869–891 (TKKD…RELL) and 947–1001 (KGKG…DRSY). Positions 948–966 (GKGKKRRGRRSKKERRRGR) are enriched in basic residues. Residues 980–990 (LSRELLDEKGP) show a composition bias toward basic and acidic residues. Disordered regions lie at residues 1113-1135 (TKKD…RELL) and 1191-1245 (KGKG…DRSY). The span at 1192 to 1210 (GKGKKRRGRRSKKERRRGR) shows a compositional bias: basic residues. Positions 1224 to 1234 (LSRELLDEKGP) are enriched in basic and acidic residues. Disordered stretches follow at residues 1357-1379 (TKKD…RELL) and 1435-1489 (KGKG…DRSY). Residues 1436–1454 (GKGKKRRGRRSKKERRRGR) show a composition bias toward basic residues. Basic and acidic residues predominate over residues 1468–1478 (LSRELLDEKGP). Disordered stretches follow at residues 1601–1623 (TKKD…RELL) and 1679–1733 (KGKG…DRSY). The segment covering 1680 to 1698 (GKGKKRRGRRSKKERRRGR) has biased composition (basic residues). The span at 1712-1722 (LSRELLDEKGP) shows a compositional bias: basic and acidic residues. Disordered stretches follow at residues 1845 to 1867 (TKKD…RELL) and 1923 to 1964 (KGKG…LDEK). Over residues 1924–1942 (GKGKKRRGRRSKKERRRGR) the composition is skewed to basic residues. 2 disordered regions span residues 2089 to 2111 (TKKD…RELL) and 2167 to 2208 (KGKG…LDEK). A compositionally biased stretch (basic residues) spans 2168-2186 (GKGKKRRGRRSKKERRRGR). Disordered regions lie at residues 2333–2355 (TKKD…RELL) and 2411–2452 (KGKG…LDEK). Residues 2412 to 2430 (GKGKKRRGRRSKKERRRGR) are compositionally biased toward basic residues. Disordered stretches follow at residues 2577–2599 (TKKD…RELL) and 2655–2709 (KGKG…DRSY). A compositionally biased stretch (basic residues) spans 2656–2674 (GKGKKRRGRRSKKERRRGR). Positions 2688–2698 (LSRELLDEKGP) are enriched in basic and acidic residues. 2 disordered regions span residues 2821-2843 (TKKD…RELL) and 2899-2953 (KGKG…DRSY). Residues 2900–2918 (GKGKKRRGRRSKKERRRGR) are compositionally biased toward basic residues. Basic and acidic residues predominate over residues 2932 to 2942 (LSRELLDEKGP). Disordered stretches follow at residues 3065-3087 (TKKD…RELL) and 3143-3197 (KGKG…DRSY). Basic residues predominate over residues 3144 to 3162 (GKGKKRRGRRSKKERRRGR). Residues 3176 to 3186 (LSRELLDEKGP) are compositionally biased toward basic and acidic residues. 2 disordered regions span residues 3309–3331 (TKKD…RELL) and 3387–3441 (KGKG…DRSY). Basic residues predominate over residues 3388–3406 (GKGKKRRGRRSKKERRRGR). Positions 3420-3430 (LSRELLDEKGP) are enriched in basic and acidic residues. Disordered regions lie at residues 3553-3575 (TKKD…RELL) and 3631-3672 (KGKG…LDEK). Positions 3632-3650 (GKGKKRRGRRSKKERRRGR) are enriched in basic residues. Disordered regions lie at residues 3797 to 3819 (TKKD…RELL) and 3875 to 3916 (KGKG…LDEK). Basic residues predominate over residues 3876-3894 (GKGKKRRGRRSKKERRRGR). Disordered stretches follow at residues 4041-4063 (TKKD…RELL) and 4119-4160 (KGKG…LDEK). A compositionally biased stretch (basic residues) spans 4120–4138 (GKGKKRRGRRSKKERRRGR). Disordered stretches follow at residues 4285 to 4307 (TKKD…RELL), 4361 to 4404 (EKKG…LDEK), 4453 to 4474 (RTKK…LSRE), and 4530 to 4573 (EKKG…LDEK). Over residues 4364-4382 (GKGKKRRGRRSKKERRRGR) the composition is skewed to basic residues. Positions 4533–4551 (GKGKKRRGRRSKKERRRGR) are enriched in basic residues. 2 disordered regions span residues 4773–4793 (TKKD…LSRE) and 4851–4889 (KGKG…RELL). Residues 4852-4870 (GKGKKRRGRRSKKERRRGR) show a composition bias toward basic residues. Disordered stretches follow at residues 5017-5037 (TKKD…LSRE) and 5094-5128 (KKGK…CPRL). Residues 5096-5114 (GKGKKRRGRRSKKKRRRGR) are compositionally biased toward basic residues.

Belongs to the NBPF family.

The protein resides in the cytoplasm. The protein is NBPF family member NBPF20 of Homo sapiens (Human).